Consider the following 160-residue polypeptide: MNSSVFIRNARYRCYNYILNFIKFRQSNKPKKISKYKKGKEIKPFDSNNKFHKNRRYWINKQVAIRKMEKEMMLYLLKNKEPLSKEKKIRMKKIRLILKKLIYKKVKTKRQKFKFFKKNKLALNFKRKRYVNVLGRIVPKRFTKLKSKEQAFYFEIYVIY.

The protein resides in the plastid. This is an uncharacterized protein from Euglena longa (Euglenophycean alga).